A 447-amino-acid chain; its full sequence is Alpha-1,3-mannosyl-glycoprotein 2-beta-N-acetylglucosaminyltransferase (447 aa).

Residues M1–T6 are Cytoplasmic-facing. The helical; Signal-anchor for type II membrane protein transmembrane segment at A7 to W29 threads the bilayer. The Lumenal portion of the chain corresponds to T30–N447. C115 and C145 are oxidised to a cystine. Residues R117, D144, H190, and D212 each coordinate substrate. D213 serves as a coordination point for Mn(2+). A disulfide bond links C239 and C305. D291 (proton acceptor) is an active-site residue. Position 322 (S322) interacts with substrate.

Belongs to the glycosyltransferase 13 family. As to quaternary structure, interacts with MGAT4D. Interacts with BRI3. The cofactor is Mn(2+). Detected in kidney, liver and brain.

It localises to the golgi apparatus membrane. Its subcellular location is the cytoplasm. It is found in the perinuclear region. The catalysed reaction is N(4)-(alpha-D-Man-(1-&gt;3)-[alpha-D-Man-(1-&gt;3)-[alpha-D-Man-(1-&gt;6)]-alpha-D-Man-(1-&gt;6)]-beta-D-Man-(1-&gt;4)-beta-D-GlcNAc-(1-&gt;4)-beta-D-GlcNAc)-L-asparaginyl-[protein] (N-glucan mannose isomer 5A1,2) + UDP-N-acetyl-alpha-D-glucosamine = N(4)-{beta-D-GlcNAc-(1-&gt;2)-alpha-D-Man-(1-&gt;3)-[alpha-D-Man-(1-&gt;3)-[alpha-D-Man-(1-&gt;6)]-alpha-D-Man-(1-&gt;6)]-beta-D-Man-(1-&gt;4)-beta-D-GlcNAc-(1-&gt;4)-beta-D-GlcNAc}-L-asparaginyl-[protein] + UDP + H(+). Its pathway is protein modification; protein glycosylation. Initiates complex N-linked carbohydrate formation. Essential for the conversion of high-mannose to hybrid and complex N-glycans. The protein is Alpha-1,3-mannosyl-glycoprotein 2-beta-N-acetylglucosaminyltransferase (Mgat1) of Mus musculus (Mouse).